A 383-amino-acid polypeptide reads, in one-letter code: Homeobox protein knotted-1-like 5 (383 aa).

2 disordered regions span residues 1 to 35 (MSFN…HFSE) and 52 to 73 (TTAD…ADTN). An ELK domain is found at 281–301 (ELKHELKQGFKEKIVDIREEI). Positions 302 to 365 (MRKRRAGKLP…NQRKRNWNSN (64 aa)) form a DNA-binding region, homeobox; TALE-type. The tract at residues 361–383 (NWNSNSSTSSTLTKNKRKRTGKS) is disordered. Low complexity predominate over residues 362–373 (WNSNSSTSSTLT). The segment covering 374 to 383 (KNKRKRTGKS) has biased composition (basic residues).

It belongs to the TALE/KNOX homeobox family. As to quaternary structure, may form heterodimeric complex with the TALE/BELL protein BEL1, BLH1 and BLH2. Interacts with OFP1, OFP2, OFP3 and OFP4.

The protein resides in the nucleus. The sequence is that of Homeobox protein knotted-1-like 5 (KNAT5) from Arabidopsis thaliana (Mouse-ear cress).